The sequence spans 902 residues: Potassium/sodium hyperpolarization-activated cyclic nucleotide-gated channel 1 (902 aa).

The tract at residues 1 to 75 (MEGGGKPNSA…PAGSFEDAEG (75 aa)) is disordered. Residues 1–131 (MEGGGKPNSA…WIIHPYSDFR (131 aa)) lie on the Cytoplasmic side of the membrane. Residues 132 to 153 (FYWDLIMLIMMVGNLVIIPVGI) form a helical membrane-spanning segment. The Extracellular segment spans residues 154 to 162 (TFFTEQTTT). The helical transmembrane segment at 163-183 (PWIIFNVASDTVFLLDLIMNF) threads the bilayer. The Cytoplasmic segment spans residues 184 to 204 (RTGTVNEDSSEIILDPKVIKM). The chain crosses the membrane as a helical span at residues 205-225 (NYLKSWFVVDFISSIPVDYIF). Over 226–249 (LIVEKGMDSEVYKTARALRIVRFT) the chain is Extracellular. Residues 250-270 (KILSLLRLLRLSRLIRYIHQW) traverse the membrane as a helical; Voltage-sensor segment. The Cytoplasmic segment spans residues 271–284 (EEIFHMTYDLASAV). Residues 285–307 (VRIFNLIGMMLLLCHWDGCLQFL) traverse the membrane as a helical segment. The Extracellular portion of the chain corresponds to 308–333 (VPLLQDFPPDCWVSLNEMVNDSWGKQ). Asn-327 carries an N-linked (GlcNAc...) asparagine glycan. Residues 334-355 (YSYALFKAMSHMLCIGYGAQAP) constitute an intramembrane region (pore-forming). Positions 347-351 (CIGYG) match the Selectivity filter motif. Topologically, residues 356-360 (VSMSD) are extracellular. The helical transmembrane segment at 361-381 (LWITMLSMIVGATCYAMFVGH) threads the bilayer. The Cytoplasmic segment spans residues 382–902 (ATALIQSLDS…AEKPRFASNL (521 aa)). Residues Gly-528, Glu-529, Cys-531, Arg-538, Thr-539, Arg-579, and Arg-582 each contribute to the 3',5'-cyclic AMP site. Disordered stretches follow at residues 634-681 (TALN…QPSA), 713-824 (ASQL…VGES), and 858-902 (MSSG…ASNL). Composition is skewed to low complexity over residues 639 to 680 (TSST…PQPS), 720 to 736 (QQPQPQLQQSQVQQTQP), and 744 to 769 (QPQQQQQQQQQQQQQQQQQQQQQQPQ). A compositionally biased stretch (polar residues) spans 770–793 (TPGSSTPKNEVHKSTQALHNTNLT). A compositionally biased stretch (pro residues) spans 867–877 (RGVPPAPPPPA). Residues 889–902 (KDPDAEKPRFASNL) are compositionally biased toward basic and acidic residues.

This sequence belongs to the potassium channel HCN family. Homotetramer. Heterotetramer with HCN2. The potassium channel is composed of a homo- or heterotetrameric complex of pore-forming subunits. Interacts with KCNE2. Interacts with the SH3 domain of CSK. Highly expressed in cerebral cortex, cerebellum, throughout the hippocampus, in medial habenula, anterior dorsal nucleus in the thalamus, tenia tecta, several nuclei of the general motor system and in optic nerve layer. Detected in a subset of elongated cells in taste buds.

It is found in the cell membrane. It carries out the reaction Na(+)(in) = Na(+)(out). The catalysed reaction is K(+)(in) = K(+)(out). With respect to regulation, activated by cAMP, and at 10-100 times higher concentrations, also by cGMP. cAMP binding promotes tetramerization and formation of an active channel. Compared to other family members, cAMP has less stimulatory effect on HCN1 because part of the molecules already contain bound cAMP and form homotetramers when cAMP levels are low, this inherent tetramerization in HCN1 results in a weaker response to increased cAMP. Its function is as follows. Hyperpolarization-activated ion channel that are permeable to sodium and potassium ions. Exhibits weak selectivity for potassium over sodium ions. Contributes to the native pacemaker currents in heart (If) and in neurons (Ih). Participates in cerebellar mechanisms of motor learning. May mediate responses to sour stimuli. The polypeptide is Potassium/sodium hyperpolarization-activated cyclic nucleotide-gated channel 1 (Hcn1) (Rattus norvegicus (Rat)).